The chain runs to 578 residues: MQFCFRILILYISLSIDNNYLVTTLISLKENVFLHIFTLTFLFKAFLLKMAKRSVEELKRSADEEASVKRKEKKSKHEHKKHKKDKPSADKDRISKKDKKKSKKGKSKTKEESIEINAEEGAKIAQPAIGSANASNHNDEEAYDRYIKKHNISFADPKSSENLLPILQFDELDVSAKLREGLKNYKEPTPIQAATWPYLLAGRDVVGIAETGSGKTVAFGIPALQYLNGLSDNKSVPRVLVVSPTRELAIQTYENLNSLIQGTNLKAVVVYGGAPKSEQARAAKNASVIIGTPGRLLDLINDGSIDCSQVGYLVLDEADRMLDTGFEQDIRNIISHTPDPTRNGSRQTVFFSATWPESVRALAATFLKDPVKITIGSDELAASQNITQIVEILDDPRSKERMLDNLLRKHLSSGGKDDKILIFVLYKKEAARVEGTLARKYNVVGIHGDMSQGARLQALNDFKSGKCPVLVATDVAARGLDIPKVQLVINVTFPLTIEDYVHRIGRTGRANTKGTAITFFTPQDKSHAGELVNVLRQAKQDIPEGLFKFGTAVKPKLNAYGSRVVDVPVKAATKIVFD.

The segment covering 59-69 (KRSADEEASVK) has biased composition (basic and acidic residues). Positions 59–117 (KRSADEEASVKRKEKKSKHEHKKHKKDKPSADKDRISKKDKKKSKKGKSKTKEESIEIN) are disordered. Residues 70-85 (RKEKKSKHEHKKHKKD) show a composition bias toward basic residues. The span at 86-95 (KPSADKDRIS) shows a compositional bias: basic and acidic residues. Residues 96–107 (KKDKKKSKKGKS) show a composition bias toward basic residues. The Q motif motif lies at 167-193 (LQFDELDVSAKLREGLKNYKEPTPIQA). Residues 196-373 (WPYLLAGRDV…ATFLKDPVKI (178 aa)) form the Helicase ATP-binding domain. Residue 209–216 (AETGSGKT) participates in ATP binding. A DEAD box motif is present at residues 316–319 (DEAD). The region spanning 402–550 (MLDNLLRKHL…DIPEGLFKFG (149 aa)) is the Helicase C-terminal domain.

Belongs to the DEAD box helicase family. DDX5/DBP2 subfamily.

The protein localises to the nucleus. It is found in the nucleolus. It carries out the reaction ATP + H2O = ADP + phosphate + H(+). Functionally, ATP-dependent RNA helicase required for 60S ribosomal subunit synthesis. Involved in efficient pre-rRNA processing, predominantly at site A3, which is necessary for the normal formation of 25S and 5.8S rRNAs. The sequence is that of ATP-dependent RNA helicase dbp3 (dbp3) from Schizosaccharomyces pombe (strain 972 / ATCC 24843) (Fission yeast).